Here is a 433-residue protein sequence, read N- to C-terminus: PHO85 cyclin-10 (433 aa).

Positions 1–10 (MDMTKNHTTD) are enriched in basic and acidic residues. Disordered regions lie at residues 1 to 20 (MDMT…GDIR) and 51 to 81 (LTSE…TTDS). Residues 51-63 (LTSEWDQSRSNTP) show a composition bias toward polar residues.

This sequence belongs to the cyclin family. PHO80 subfamily. As to quaternary structure, forms a cyclin-CDK complex with PHO85. Interacts with GSY2, independent of the presence of PHO85.

The protein localises to the cytoplasm. Its function is as follows. Cyclin partner of the cyclin-dependent kinase (CDK) PHO85. Together with cyclin PCL8, negatively controls glycogen accumulation under favorable growth conditions. The PCL10-PHO85 cyclin-CDK holoenzyme has glycogen synthase kinase activity and phosphorylates and negatively regulates glycogen synthase GSY2. Also has minor GLC8 kinase activity. The chain is PHO85 cyclin-10 (PCL10) from Saccharomyces cerevisiae (strain ATCC 204508 / S288c) (Baker's yeast).